We begin with the raw amino-acid sequence, 300 residues long: Pantothenate synthetase (300 aa).

Residue Met30–His37 participates in ATP binding. His37 acts as the Proton donor in catalysis. Gln61 is a (R)-pantoate binding site. Gln61 is a binding site for beta-alanine. ATP is bound at residue Gly147 to Asp150. Gln153 provides a ligand contact to (R)-pantoate. ATP-binding positions include Val176 and Lys184–Arg187.

It belongs to the pantothenate synthetase family. In terms of assembly, homodimer.

Its subcellular location is the cytoplasm. The catalysed reaction is (R)-pantoate + beta-alanine + ATP = (R)-pantothenate + AMP + diphosphate + H(+). It participates in cofactor biosynthesis; (R)-pantothenate biosynthesis; (R)-pantothenate from (R)-pantoate and beta-alanine: step 1/1. In terms of biological role, catalyzes the condensation of pantoate with beta-alanine in an ATP-dependent reaction via a pantoyl-adenylate intermediate. This Geobacillus kaustophilus (strain HTA426) protein is Pantothenate synthetase.